The following is a 62-amino-acid chain: Conotoxin Tx5.1 (62 aa).

The signal sequence occupies residues 1-22; that stretch reads MCCLPVFVILLLLIASAPSVDA. Positions 23-49 are excised as a propeptide; sequence QPKTKDDVPLAPLHDNAKSALQHLNQR. At Gln60 the chain carries Glutamine amide.

It belongs to the conotoxin T superfamily. Contains 2 disulfide bonds that can be either 'C1-C3, C2-C4' or 'C1-C4, C2-C3', since these disulfide connectivities have been observed for conotoxins with cysteine framework V (for examples, see AC P0DQQ7 and AC P81755). As to expression, expressed by the venom duct.

It localises to the secreted. This chain is Conotoxin Tx5.1, found in Conus textile (Cloth-of-gold cone).